Here is a 669-residue protein sequence, read N- to C-terminus: L-type lectin-domain containing receptor kinase V.9 (669 aa).

Positions 1–21 (MKFFVLVLLLVLQFFSNKALS) are cleaved as a signal peptide. Over 22–286 (QSEEGEFGFN…RDSRSTSVKK (265 aa)) the chain is Extracellular. The tract at residues 38–259 (SGIAITNSKG…SHYILGWTFK (222 aa)) is legume-lectin like. N-linked (GlcNAc...) asparagine glycosylation is found at asparagine 53, asparagine 75, asparagine 124, asparagine 206, and asparagine 261. A helical membrane pass occupies residues 287–307 (ILAISLSLTSLAILVFLTISY). The Cytoplasmic portion of the chain corresponds to 308 to 669 (MLFLKRKKLM…FTEPFVSHGR (362 aa)). The Protein kinase domain occupies 344 to 603 (FRNSELLGKG…LGLFCSHPVA (260 aa)). ATP is bound by residues 350 to 358 (LGKGGFGKV) and lysine 373. Aspartate 469 acts as the Proton acceptor in catalysis.

The protein in the C-terminal section; belongs to the protein kinase superfamily. Ser/Thr protein kinase family. This sequence in the N-terminal section; belongs to the leguminous lectin family.

It localises to the cell membrane. The enzyme catalyses L-seryl-[protein] + ATP = O-phospho-L-seryl-[protein] + ADP + H(+). It carries out the reaction L-threonyl-[protein] + ATP = O-phospho-L-threonyl-[protein] + ADP + H(+). This is L-type lectin-domain containing receptor kinase V.9 (LECRK59) from Arabidopsis thaliana (Mouse-ear cress).